A 636-amino-acid polypeptide reads, in one-letter code: DNA ligase (636 aa).

Lysine 113 (N6-AMP-lysine intermediate) is an active-site residue. The region spanning 560 to 636 (NSEGIFQNQT…KSSFSKKFEK (77 aa)) is the BRCT domain.

The protein belongs to the NAD-dependent DNA ligase family.

The catalysed reaction is NAD(+) + (deoxyribonucleotide)n-3'-hydroxyl + 5'-phospho-(deoxyribonucleotide)m = (deoxyribonucleotide)n+m + AMP + beta-nicotinamide D-nucleotide.. Functionally, catalyzes the formation of phosphodiester linkages between 5'-phosphoryl and 3'-hydroxyl groups in double-stranded DNA using NAD as a coenzyme and as the energy source for the reaction. This chain is DNA ligase, found in Acanthamoeba polyphaga (Amoeba).